Consider the following 673-residue polypeptide: Bifunctional polymyxin resistance protein ArnA (673 aa).

The interval 1-311 (MKAIVFAYHD…EMGMVPQARL (311 aa)) is formyltransferase ArnAFT. His-104 functions as the Proton donor; for formyltransferase activity in the catalytic mechanism. Residues Arg-114 and 136–140 (VSRAD) contribute to the (6R)-10-formyltetrahydrofolate site. The dehydrogenase ArnADH stretch occupies residues 321–673 (RRTRVLILGV…HTADATDTQG (353 aa)). NAD(+) contacts are provided by residues Asp-354 and 375–376 (DI). Residues Ala-400, Tyr-405, and 439–440 (TS) each bind UDP-alpha-D-glucuronate. The Proton acceptor; for decarboxylase activity role is filled by Glu-441. UDP-alpha-D-glucuronate contacts are provided by residues Arg-467, Asn-499, 533 to 542 (KLVDGGAQKR), and Tyr-620. Residue Arg-626 is the Proton donor; for decarboxylase activity of the active site.

The protein in the N-terminal section; belongs to the Fmt family. UDP-L-Ara4N formyltransferase subfamily. This sequence in the C-terminal section; belongs to the NAD(P)-dependent epimerase/dehydratase family. UDP-glucuronic acid decarboxylase subfamily. As to quaternary structure, homohexamer, formed by a dimer of trimers.

It catalyses the reaction UDP-alpha-D-glucuronate + NAD(+) = UDP-beta-L-threo-pentopyranos-4-ulose + CO2 + NADH. The catalysed reaction is UDP-4-amino-4-deoxy-beta-L-arabinose + (6R)-10-formyltetrahydrofolate = UDP-4-deoxy-4-formamido-beta-L-arabinose + (6S)-5,6,7,8-tetrahydrofolate + H(+). It functions in the pathway nucleotide-sugar biosynthesis; UDP-4-deoxy-4-formamido-beta-L-arabinose biosynthesis; UDP-4-deoxy-4-formamido-beta-L-arabinose from UDP-alpha-D-glucuronate: step 1/3. Its pathway is nucleotide-sugar biosynthesis; UDP-4-deoxy-4-formamido-beta-L-arabinose biosynthesis; UDP-4-deoxy-4-formamido-beta-L-arabinose from UDP-alpha-D-glucuronate: step 3/3. It participates in bacterial outer membrane biogenesis; lipopolysaccharide biosynthesis. Its function is as follows. Bifunctional enzyme that catalyzes the oxidative decarboxylation of UDP-glucuronic acid (UDP-GlcUA) to UDP-4-keto-arabinose (UDP-Ara4O) and the addition of a formyl group to UDP-4-amino-4-deoxy-L-arabinose (UDP-L-Ara4N) to form UDP-L-4-formamido-arabinose (UDP-L-Ara4FN). The modified arabinose is attached to lipid A and is required for resistance to polymyxin and cationic antimicrobial peptides. The sequence is that of Bifunctional polymyxin resistance protein ArnA from Pectobacterium atrosepticum (strain SCRI 1043 / ATCC BAA-672) (Erwinia carotovora subsp. atroseptica).